Here is a 248-residue protein sequence, read N- to C-terminus: Methionine aminopeptidase 1 (248 aa).

Residue His77 participates in substrate binding. A divalent metal cation is bound by residues Asp94, Asp105, and His168. His175 serves as a coordination point for substrate. Residues Glu201 and Glu232 each coordinate a divalent metal cation.

Monomer. Co(2+) serves as cofactor. It depends on Zn(2+) as a cofactor. Requires Mn(2+) as cofactor. The cofactor is Fe(2+).

It localises to the cytoplasm. It carries out the reaction Release of N-terminal amino acids, preferentially methionine, from peptides and arylamides.. Its function is as follows. Removes the N-terminal methionine from nascent proteins. The N-terminal methionine is often cleaved when the second residue in the primary sequence is small and uncharged (Met-Ala-, Cys, Gly, Pro, Ser, Thr, or Val). Requires deformylation of the N(alpha)-formylated initiator methionine before it can be hydrolyzed. The chain is Methionine aminopeptidase 1 from Bacillus subtilis (strain 168).